The chain runs to 198 residues: Putative mycofactocin biosynthesis transcriptional regulator MftR (198 aa).

The 61-residue stretch at 12-72 (STTPHHISDV…GDFSTHLAQL (61 aa)) folds into the HTH tetR-type domain. Residues 35 to 54 (SVDDIARAAGIARRTLFRYY) constitute a DNA-binding region (H-T-H motif).

Its function is as follows. May regulate a gene cluster involved in mycofactocin expression. Mycofactocin is a conserved polypeptide that might serve as an electron carrier. This Mycobacterium tuberculosis (strain ATCC 25618 / H37Rv) protein is Putative mycofactocin biosynthesis transcriptional regulator MftR (mftR).